An 888-amino-acid polypeptide reads, in one-letter code: DNA mismatch repair protein MutS (888 aa).

Residues I249 to P271 are disordered. G638–S645 contacts ATP.

It belongs to the DNA mismatch repair MutS family.

Functionally, this protein is involved in the repair of mismatches in DNA. It is possible that it carries out the mismatch recognition step. This protein has a weak ATPase activity. The protein is DNA mismatch repair protein MutS of Nitrobacter winogradskyi (strain ATCC 25391 / DSM 10237 / CIP 104748 / NCIMB 11846 / Nb-255).